A 130-amino-acid polypeptide reads, in one-letter code: C-type natriuretic peptide 2 (130 aa).

The first 22 residues, 1 to 22 (MAASSSSFVPLVLLFLAIPVEP), serve as a signal peptide directing secretion. Positions 23–103 (RPSMTRDEAQ…LQQQSKTTRR (81 aa)) are excised as a propeptide. The interval 57–77 (ELLPRRPGPPRSFGASPGALR) is disordered. C114 and C130 are oxidised to a cystine.

Belongs to the natriuretic peptide family.

Its subcellular location is the secreted. Exhibits natriuretic and vasodepressant activity. Has cGMP-stimulating activity. May help to regulate body fluid homeostasis in a variety of aquatic environments. This chain is C-type natriuretic peptide 2, found in Takifugu rubripes (Japanese pufferfish).